A 335-amino-acid polypeptide reads, in one-letter code: MLRLSLLRSTATLPVKCQRRGLILPAAAMYTLGSLIFGKEARLADAMERGELHNKNVDYAKEAEERTELRIRALANTRPMEPRYNGHVPLHRYEKLLLFAISGWNSFFHPEDGYNIVQLGEATALPVFLENLKQTMLSDSSGRRILKEQPNITTEILHMDKLAKLPHNTLGYVYYQWLKRENVSPDTRAPVKFIDDPMHAYIFKRYRQCHDFYHAITNMPIIIEGEITIKALEGANLGVPMAILGGILAPLRLKKVQRKRLYNIYLPWAVRTGLSCKPLINVYWEEMLEKDVTALRKELKITLPPDLRTMRKERAALRKEIDAKYNSQKRATTPA.

Residues 1–10 (MLRLSLLRST) constitute a mitochondrion transit peptide. Zn(2+) contacts are provided by His210, Asp211, His214, and Glu226.

It belongs to the COQ4 family. Component of a multi-subunit COQ enzyme complex, composed of at least COQ3, COQ4, COQ5, COQ6, COQ7 and COQ9. Interacts with COQ3. The cofactor is Zn(2+).

It localises to the mitochondrion inner membrane. It carries out the reaction 4-hydroxy-3-methoxy-5-(all-trans-hexaprenyl)benzoate + H(+) = 2-methoxy-6-(all-trans-hexaprenyl)phenol + CO2. The protein operates within cofactor biosynthesis; ubiquinone biosynthesis. Lyase that catalyzes the C1-decarboxylation of 4-hydroxy-3-methoxy-5-(all-trans-hexaprenyl)benzoic acid into 2-methoxy-6-(all-trans-hexaprenyl)phenol during ubiquinone biosynthesis. The polypeptide is Ubiquinone biosynthesis protein COQ4, mitochondrial (Saccharomyces cerevisiae (strain AWRI1631) (Baker's yeast)).